Reading from the N-terminus, the 389-residue chain is N-terminal EF-hand calcium-binding protein 2 (389 aa).

An Omega-N-methylarginine modification is found at R10. At R42 the chain carries Asymmetric dimethylarginine. 2 consecutive EF-hand domains span residues G63–N98 and E99–D132. 10 residues coordinate Ca(2+): D76, N78, D80, K82, E87, D110, D112, T114, H116, and E121. Residues L173–T198 are a coiled coil. Residues Q289–I377 form the ABM domain.

As to quaternary structure, interacts (calcium-dependent) with ADORA2A and GRM5. In terms of tissue distribution, expressed in the iris, in the ciliary margin of the retina and in the inner portion of the neural retina. Expressed in the spinal dorsal horn with especially strong expression in lamina IIi; found in excitory synaptic boutons (at protein level).

It is found in the cytoplasm. The protein resides in the cell projection. Its subcellular location is the dendrite. It localises to the axon. The protein localises to the cell membrane. Its function is as follows. May act as a signaling scaffold protein that senses intracellular calcium. Can modulate ligand-induced internalization of ADORA2A and coupling efficiency of mGluR5/GRM5; for both receptors may regulate signaling activity such as promoting MAPK1/3 (ERK1/2) activation. This chain is N-terminal EF-hand calcium-binding protein 2 (Necab2), found in Mus musculus (Mouse).